The following is a 572-amino-acid chain: Zyxin (572 aa).

At A2 the chain carries N-acetylalanine. The disordered stretch occupies residues 23-351 (QKKFGPVVAP…VRSPGAPGPL (329 aa)). Composition is skewed to pro residues over residues 63–78 (IPPP…PPPL) and 93–108 (FPPP…PPAP). Residues S116, S142, S143, S169, and S170 each carry the phosphoserine modification. Residues 143 to 156 (SIDLEIDSLSSLLD) are compositionally biased toward low complexity. T179 bears the Phosphothreonine mark. A compositionally biased stretch (low complexity) spans 202-239 (SPSSSQPLPQVPAPAQSQTQFHVQPQPQPKPQVQLHVQ). Residues 240–252 (SQTQPVSLANTQP) show a composition bias toward polar residues. At R253 the chain carries Asymmetric dimethylarginine. Positions 253–265 (RGPPASSPAPAPK) are enriched in pro residues. S259 is modified (phosphoserine). Residue K265 is modified to N6-acetyllysine. S267 bears the Phosphoserine mark. T270 bears the Phosphothreonine mark. K272 bears the N6-acetyllysine mark. Phosphothreonine is present on T274. Residue K279 is modified to N6-acetyllysine. A phosphoserine mark is found at S281, S288, and S308. Residues 305-318 (GTGSPQPPSFTYAQ) show a composition bias toward polar residues. Residues 319-330 (QREKPRVQEKQH) are compositionally biased toward basic and acidic residues. S344 carries the phosphoserine modification. LIM zinc-binding domains are found at residues 384 to 443 (CGRC…TLEK), 444 to 503 (CNTC…YAPR), and 504 to 570 (CSVC…TARA).

It belongs to the zyxin/ajuba family. Interacts with HPV type 6 protein E6. Does not interact significantly with E6 proteins from HPV types 11, 16, or 18. Interacts, via the Pro-rich regions, with the EVH1 domains of ENAH, EVL and VASP. Interacts with the first LIM domain of TES. Interacts with NEBL (isoform 2). Interacts with SYNPO2. As to quaternary structure, (Microbial infection) Interacts with human papillomavirus type 6/HPV6 protein E6. Does not interact significantly with E6 proteins from HPV types 11, 16, or 18.

The protein localises to the cytoplasm. Its subcellular location is the cytoskeleton. The protein resides in the nucleus. It is found in the cell junction. It localises to the focal adhesion. Functionally, adhesion plaque protein. Binds alpha-actinin and the CRP protein. Important for targeting TES and ENA/VASP family members to focal adhesions and for the formation of actin-rich structures. May be a component of a signal transduction pathway that mediates adhesion-stimulated changes in gene expression. The protein is Zyxin (ZYX) of Homo sapiens (Human).